Consider the following 314-residue polypeptide: Serine protease 46 (314 aa).

Positions 44-281 constitute a Peptidase S1 domain; that stretch reads VVNGKVVEVG…FTQWIKRQIG (238 aa). Residues C69 and C85 are joined by a disulfide bond. Residues H84 and D130 each act as charge relay system in the active site. 3 disulfides stabilise this stretch: C164–C239, C197–C219, and C229–C257. Residue S233 is the Charge relay system of the active site. Residues 293–313 traverse the membrane as a helical segment; it reads FLSPFILTGYILLVSLGSLWL.

This sequence belongs to the peptidase S1 family.

It localises to the membrane. This is Serine protease 46 (Prss46) from Rattus norvegicus (Rat).